Consider the following 62-residue polypeptide: Cryptic Mu-phage protein com (62 aa).

The protein belongs to the com family.

This is Cryptic Mu-phage protein com from Shigella dysenteriae.